A 2333-amino-acid chain; its full sequence is Genome polyprotein (2333 aa).

Residues 1–201 form the Peptidase C28 domain; that stretch reads MNTTNCFIAL…WKANVQRKLK (201 aa). Residues 1 to 1481 are Cytoplasmic-facing; the sequence is MNTTNCFIAL…SFVKRAFKRL (1481 aa). Active-site for leader protease activity residues include Cys-51, His-148, and Asp-163. Disordered stretches follow at residues 199-218 and 238-265; these read KLKGAGQSSPATGSQNQSGN and QLGDNAISGGSNEGSTDTTSTHTTNTQN. Gly-202 is lipidated: N-myristoyl glycine; by host. 2 stretches are compositionally biased toward polar residues: residues 204 to 218 and 238 to 251; these read GQSSPATGSQNQSGN and QLGDNAISGGSNEG. The span at 252–265 shows a compositional bias: low complexity; it reads STDTTSTHTTNTQN. Residues 789 to 797 are antigenic epitope; that stretch reads ALLRAATYY. Residues 869 to 871 carry the Cell attachment site motif; sequence RGD. An SF3 helicase domain is found at 1190–1354; that stretch reads NVHIANLCKV…DGYKINNKLD (165 aa). 1218–1225 is an ATP binding site; that stretch reads GKSGQGKS. An intramembrane segment occupies 1482–1502; that stretch reads KENFEIVALCLTLLANIVIMI. The Cytoplasmic portion of the chain corresponds to 1503–2333; sequence RETRKRQKMV…RWVNAVCGDA (831 aa). Residues 1562 to 1589 are disordered; it reads NDVNSEPARPAEEQPQAEGPYTGPLERQ. Residues Tyr-1582, Tyr-1605, and Tyr-1629 each carry the O-(5'-phospho-RNA)-tyrosine modification. A Peptidase C3 domain is found at 1653 to 1849; sequence APPTDLQKMV…YCSCVSRSML (197 aa). His-1696 acts as the For protease 3C activity; Proton donor/acceptor in catalysis. Catalysis depends on for protease 3C activity residues Asp-1734 and Cys-1813. Residues 1879–1887 carry the Nuclear localization signal motif; sequence MRKTKLAPT. One can recognise a RdRp catalytic domain in the interval 2097–2215; the sequence is RNVWDVDYSA…ASDYDLDFEA (119 aa). The For RdRp activity role is filled by Gly-2200.

This sequence belongs to the picornaviruses polyprotein family. In terms of assembly, interacts with host ISG15. As to quaternary structure, interacts (via R-G-D motif) with host ITGAV/ITGB6. Interacts with host MAVS; this interaction inhibits binding of host TRAF3 to MAVS, thereby suppressing interferon-mediated responses. Forms homooligomers. In terms of assembly, homohexamer. Interacts with host VIM. Interacts with host BECN1. As to quaternary structure, interacts with host DCTN3. Interacts with RNA-dependent RNA polymerase; this interaction allows 3B-1 to binds 2 polymerases and act as a primer. It also allows the recruitment of the RNA-dependent RNA polymerase to host membranes. In terms of assembly, interacts with RNA-dependent RNA polymerase; this interaction allows 3B-2 to act as a primer. As to quaternary structure, interacts with RNA-dependent RNA polymerase; this interaction allows 3B-3 to act as a primer. Interacts with 3B-1; this interaction allows 3B-1 to binds 2 polymerases and act as a primer. It also allows the recruitment of the RNA-dependent RNA polymerase to host membranes. Interacts with 3B-2; this interaction allows 3B-2 to act as a primer. Interacts with 3B-3; this interaction allows 3B-3 to act as a primer. In terms of processing, removes six residues from its own C-terminus, generating sLb(pro). Post-translationally, specific enzymatic cleavages in vivo by the viral proteases yield a variety of precursors and mature proteins. The polyprotein seems to be cotranslationally cleaved at the 2A/2B junction by a ribosomal skip from one codon to the next without formation of a peptide bond. This process would release the L-P1-2A peptide from the translational complex. During virion maturation, immature virions are rendered infectious following cleavage of VP0 into VP4 and VP2. This maturation seems to be an autocatalytic event triggered by the presence of RNA in the capsid and is followed by a conformational change of the particle. In terms of processing, myristoylation is required during RNA encapsidation and formation of the mature virus particle. Post-translationally, uridylylated by the polymerase and covalently linked to the 5'-end of genomic RNA. These uridylylated forms act as a nucleotide-peptide primer for the polymerase.

It is found in the host nucleus. It localises to the host cytoplasm. The protein localises to the virion. The protein resides in the host endoplasmic reticulum membrane. Its subcellular location is the host cytoplasmic vesicle membrane. The enzyme catalyses Autocatalytically cleaves itself from the polyprotein of the foot-and-mouth disease virus by hydrolysis of a Lys-|-Gly bond, but then cleaves host cell initiation factor eIF-4G at bonds -Gly-|-Arg- and -Lys-|-Arg-.. It carries out the reaction a ribonucleoside 5'-triphosphate + H2O = a ribonucleoside 5'-diphosphate + phosphate + H(+). It catalyses the reaction RNA(n) + a ribonucleoside 5'-triphosphate = RNA(n+1) + diphosphate. The catalysed reaction is Selective cleavage of Gln-|-Gly bond in the poliovirus polyprotein. In other picornavirus reactions Glu may be substituted for Gln, and Ser or Thr for Gly.. Functionally, autocatalytically cleaves itself from the polyprotein at the L/VP0 junction. Also cleaves the host translation initiation factors EIF4G1 and EIF4G3, in order to shut off the capped cellular mRNA transcription. Plays a role in counteracting host innate antiviral response using diverse mechanisms. Possesses a deubiquitinase activity acting on both 'Lys-48' and 'Lys-63'-linked polyubiquitin chains. In turn, inhibits the ubiquitination and subsequent activation of key signaling molecules of type I IFN response such as host RIGI, TBK1, TRAF3 and TRAF6. Inhibits host NF-kappa-B activity by inducing a decrease in RELA mRNA levels. Cleaves a peptide bond in the C-terminus of host ISG15, resulting in the damaging of this modifier that can no longer be attached to target proteins. Also cleaves host G3BP1 and G3BP2 in order to inhibit cytoplasmic stress granules assembly. In terms of biological role, lies on the inner surface of the capsid shell. After binding to the host receptor, the capsid undergoes conformational changes. Capsid protein VP4 is released, capsid protein VP1 N-terminus is externalized, and together, they shape a pore in the host membrane through which the viral genome is translocated into the host cell cytoplasm. After genome has been released, the channel shrinks. Its function is as follows. Forms an icosahedral capsid of pseudo T=3 symmetry with capsid proteins VP1 and VP3. The capsid is composed of 60 copies of each capsid protein organized in the form of twelve pentamers and encloses the viral positive strand RNA genome. Upon acidifcation in the endosome, dissociates into pentamers. Forms an icosahedral capsid of pseudo T=3 symmetry with capsid proteins VP0 and VP3. The capsid is composed of 60 copies of each capsid protein organized in the form of twelve pentamers and encloses the viral positive strand RNA genome. Upon acidifcation in the endosome, dissociates into pentamers. Functionally, forms an icosahedral capsid of pseudo T=3 symmetry with capsid proteins VP2 and VP3. The capsid is composed of 60 copies of each capsid protein organized in the form of twelve pentamers and encloses the viral positive strand RNA genome. Mediates cell entry by attachment to an integrin receptor, usually host ITGAV/ITGB6. In addition, targets host MAVS to suppress type I IFN pathway. Upon acidifcation in the endosome, dissociates into pentamers. In terms of biological role, mediates self-processing of the polyprotein by a translational effect termed 'ribosome skipping'. Mechanistically, 2A-mediated cleavage occurs between the C-terminal glycine and the proline of the downstream protein 2B. In the case of foot-and-mouth disease virus, the 2A oligopeptide is post-translationally 'trimmed' from the C-terminus of the upstream protein 1D by 3C proteinase. Its function is as follows. Plays an essential role in the virus replication cycle by acting as a viroporin. Creates a pore in the host endoplasmic reticulum and as a consequence releases Ca2+ in the cytoplasm of infected cell. In turn, high levels of cytoplasmic calcium may trigger membrane trafficking and transport of viral ER-associated proteins to viroplasms, sites of viral genome replication. Associates with and induces structural rearrangements of intracellular membranes. Triggers host autophagy by interacting with host BECN1 and thereby promotes viral replication. Participates in viral replication and interacts with host DHX9. Displays RNA-binding, nucleotide binding and NTPase activities. May play a role in virion morphogenesis and viral RNA encapsidation by interacting with the capsid protein VP3. Functionally, plays important roles in virus replication, virulence and host range. In terms of biological role, covalently linked to the 5'-end of both the positive-strand and negative-strand genomic RNAs. Acts as a genome-linked replication primer. Its function is as follows. Cysteine protease that generates mature viral proteins from the precursor polyprotein. In addition to its proteolytic activity, binds to viral RNA and thus influences viral genome replication. RNA and substrate bind cooperatively to the protease. RNA-directed RNA polymerase 3D-POL replicates genomic and antigenomic RNA by recognizing replications specific signals. Covalently attaches UMP to a tyrosine of VPg, which is used to prime RNA synthesis. The positive stranded RNA genome is first replicated at virus induced membranous vesicles, creating a dsRNA genomic replication form. This dsRNA is then used as template to synthesize positive stranded RNA genomes. ss(+)RNA genomes are either translated, replicated or encapsidated. This Foot-and-mouth disease virus (isolate Bovine/United Kingdom/A12Valle119/1932 serotype A) (FMDV) protein is Genome polyprotein.